The sequence spans 347 residues: S-adenosylmethionine decarboxylase proenzyme 4 (347 aa).

Residues E7 and E10 contribute to the active site. A substrate-binding site is contributed by E66. The active-site Schiff-base intermediate with substrate; via pyruvic acid is the S67. The residue at position 67 (S67) is a Pyruvic acid (Ser); by autocatalysis. C81 acts as the Proton donor; for catalytic activity in catalysis. Catalysis depends on proton acceptor; for processing activity residues S237 and H250. A substrate-binding site is contributed by E254.

The protein belongs to the eukaryotic AdoMetDC family. The cofactor is pyruvate. Is synthesized initially as an inactive proenzyme. Formation of the active enzyme involves a self-maturation process in which the active site pyruvoyl group is generated from an internal serine residue via an autocatalytic post-translational modification. Two non-identical subunits are generated from the proenzyme in this reaction, and the pyruvate is formed at the N-terminus of the alpha chain, which is derived from the carboxyl end of the proenzyme. The post-translation cleavage follows an unusual pathway, termed non-hydrolytic serinolysis, in which the side chain hydroxyl group of the serine supplies its oxygen atom to form the C-terminus of the beta chain, while the remainder of the serine residue undergoes an oxidative deamination to produce ammonia and the pyruvoyl group blocking the N-terminus of the alpha chain.

The catalysed reaction is S-adenosyl-L-methionine + H(+) = S-adenosyl 3-(methylsulfanyl)propylamine + CO2. It participates in amine and polyamine biosynthesis; S-adenosylmethioninamine biosynthesis; S-adenosylmethioninamine from S-adenosyl-L-methionine: step 1/1. Functionally, essential for biosynthesis of the polyamines spermidine and spermine. Essential for polyamine homeostasis, and normal plant embryogenesis, growth and development. The protein is S-adenosylmethionine decarboxylase proenzyme 4 of Arabidopsis thaliana (Mouse-ear cress).